Here is a 212-residue protein sequence, read N- to C-terminus: ATP-dependent dethiobiotin synthetase BioD (212 aa).

Residue 13 to 18 (GIGKTV) coordinates ATP. Thr17 contributes to the Mg(2+) binding site. Lys33 is a catalytic residue. Ser37 serves as a coordination point for substrate. Glu100 serves as a coordination point for Mg(2+). ATP-binding positions include 100–103 (EGAG) and 184–186 (PLL).

The protein belongs to the dethiobiotin synthetase family. As to quaternary structure, homodimer. It depends on Mg(2+) as a cofactor.

The protein localises to the cytoplasm. It catalyses the reaction (7R,8S)-7,8-diammoniononanoate + CO2 + ATP = (4R,5S)-dethiobiotin + ADP + phosphate + 3 H(+). The protein operates within cofactor biosynthesis; biotin biosynthesis; biotin from 7,8-diaminononanoate: step 1/2. Catalyzes a mechanistically unusual reaction, the ATP-dependent insertion of CO2 between the N7 and N8 nitrogen atoms of 7,8-diaminopelargonic acid (DAPA, also called 7,8-diammoniononanoate) to form a ureido ring. The protein is ATP-dependent dethiobiotin synthetase BioD of Brucella canis (strain ATCC 23365 / NCTC 10854 / RM-666).